Consider the following 360-residue polypeptide: Phospho-N-acetylmuramoyl-pentapeptide-transferase (360 aa).

10 helical membrane passes run 26 to 46 (AILGLLTALVFSLWFGPKLIE), 74 to 94 (MGGLLILAAIFISVLLWGDLG), 97 to 117 (YVWVMLFVLGSFGLIGFIDDY), 134 to 154 (YILQSLAALLIAFFLYATAAN), 168 to 188 (VMPQLGAVFIVLAYFTIVGAS), 199 to 219 (GLAIMPTVMVAAAFALIAYLS), 236 to 256 (SGELVIVCTAIVGAGLGFLWF), 263 to 283 (VFMGDVGSLSLGAALGTIAVL), 288 to 308 (ILLVIMGGVFVMETLSVILQV), and 338 to 358 (VIVRFWIISIFLVLLGLATLK).

It belongs to the glycosyltransferase 4 family. MraY subfamily. The cofactor is Mg(2+).

Its subcellular location is the cell inner membrane. It carries out the reaction UDP-N-acetyl-alpha-D-muramoyl-L-alanyl-gamma-D-glutamyl-meso-2,6-diaminopimeloyl-D-alanyl-D-alanine + di-trans,octa-cis-undecaprenyl phosphate = di-trans,octa-cis-undecaprenyl diphospho-N-acetyl-alpha-D-muramoyl-L-alanyl-D-glutamyl-meso-2,6-diaminopimeloyl-D-alanyl-D-alanine + UMP. It participates in cell wall biogenesis; peptidoglycan biosynthesis. Catalyzes the initial step of the lipid cycle reactions in the biosynthesis of the cell wall peptidoglycan: transfers peptidoglycan precursor phospho-MurNAc-pentapeptide from UDP-MurNAc-pentapeptide onto the lipid carrier undecaprenyl phosphate, yielding undecaprenyl-pyrophosphoryl-MurNAc-pentapeptide, known as lipid I. This is Phospho-N-acetylmuramoyl-pentapeptide-transferase from Shewanella baltica (strain OS185).